A 314-amino-acid polypeptide reads, in one-letter code: Olfactory receptor 5G9 (314 aa).

Residues Met-1–Val-25 lie on the Extracellular side of the membrane. N-linked (GlcNAc...) asparagine glycosylation is present at Asn-5. Residues Phe-26–Ile-46 form a helical membrane-spanning segment. The Cytoplasmic portion of the chain corresponds to Ile-47–Arg-54. Residues Leu-55–Ser-75 traverse the membrane as a helical segment. Topologically, residues Val-76–Leu-99 are extracellular. A disulfide bridge links Cys-97 with Cys-189. Residues Gln-100–Tyr-120 traverse the membrane as a helical segment. The Cytoplasmic segment spans residues Asp-121–Ser-133. A helical membrane pass occupies residues Val-134–Phe-154. At Asn-155–Lys-196 the chain is on the extracellular side. Residues Leu-197–Ser-217 traverse the membrane as a helical segment. At Tyr-218–Ala-237 the chain is on the cytoplasmic side. The chain crosses the membrane as a helical span at residues Phe-238 to Ile-258. The Extracellular portion of the chain corresponds to Tyr-259–Asn-271. A helical membrane pass occupies residues Lys-272–Leu-292. The Cytoplasmic segment spans residues Arg-293–Asn-314.

The protein belongs to the G-protein coupled receptor 1 family.

It is found in the cell membrane. Potential odorant receptor. The sequence is that of Olfactory receptor 5G9 from Mus musculus (Mouse).